The chain runs to 452 residues: Neuronal acetylcholine receptor subunit alpha-5 (452 aa).

A signal peptide spans 1–27 (MVQLLAGRWRPTGARRGTRGGLPELSS). Residues 28 to 239 (AAKHEDSLFR…VIKRLPLFYT (212 aa)) lie on the Extracellular side of the membrane. Asparagine 140, asparagine 168, and asparagine 214 each carry an N-linked (GlcNAc...) asparagine glycan. Cysteine 155 and cysteine 169 are joined by a disulfide. Cysteine 219 and cysteine 220 are disulfide-bonded. The next 3 helical transmembrane spans lie at 240–260 (LFLI…FYLP), 269–289 (LCTS…EIIP), and 302–322 (LVFT…AINI). The Cytoplasmic segment spans residues 323–414 (HHRSSSTHNA…KFIAQVLDRM (92 aa)). The helical transmembrane segment at 415 to 435 (FLWTFLLVSIIGTLGLFVPVI) threads the bilayer. At 436 to 452 (YKWANIIVPVHIGNTIK) the chain is on the extracellular side.

This sequence belongs to the ligand-gated ion channel (TC 1.A.9) family. Acetylcholine receptor (TC 1.A.9.1) subfamily. Alpha-5/CHRNA5 sub-subfamily. As to quaternary structure, neuronal AChR that forms heteropentamers composed of two different type of subunits: alpha and non-alpha (beta). CHRNA5/alpha-5 subunit is only able to form functional nAChRs when co-assembled with another alpha subunit, can be combined to CHRNA4/alpha-4 or CHRNA3/alpha-3 and CHRNB4/beta-4 or CHRNB2/beta-2 to give rise to functional receptors. Interacts with LYPD6.

It localises to the synaptic cell membrane. The protein localises to the cell membrane. It carries out the reaction Ca(2+)(in) = Ca(2+)(out). The catalysed reaction is K(+)(in) = K(+)(out). The enzyme catalyses Na(+)(in) = Na(+)(out). Its activity is regulated as follows. Activated by a myriad of ligands such as acetylcholine, cytisine, nicotine, choline and epibatidine. Functionally, component of neuronal acetylcholine receptors (nAChRs) that function as pentameric, ligand-gated cation channels with high calcium permeability among other activities. nAChRs are excitatory neurotrasnmitter receptors formed by a collection of nAChR subunits known to mediate synaptic transmission in the nervous system and the neuromuscular junction. Each nAchR subunit confers differential attributes to channel properties, including activation, deactivation and desensitization kinetics, pH sensitivity, cation permeability, and binding to allosteric modulators. Has an accessory rather than functional role and is only able to form functional nAChRs when co-assembled with another beta subunit. Participates in pentameric assemblies along with CHRNA3, CHRNA4, CHRNB2 and CHRNB4. Increases receptor sensitivity to acetylcholine and nicotine when associated with CHRNA4 and CHRNB2. Plays a role in nicotine addiction. The polypeptide is Neuronal acetylcholine receptor subunit alpha-5 (Chrna5) (Rattus norvegicus (Rat)).